Reading from the N-terminus, the 119-residue chain is Ribonuclease P protein component (119 aa).

It belongs to the RnpA family. As to quaternary structure, consists of a catalytic RNA component (M1 or rnpB) and a protein subunit.

It carries out the reaction Endonucleolytic cleavage of RNA, removing 5'-extranucleotides from tRNA precursor.. Functionally, RNaseP catalyzes the removal of the 5'-leader sequence from pre-tRNA to produce the mature 5'-terminus. It can also cleave other RNA substrates such as 4.5S RNA. The protein component plays an auxiliary but essential role in vivo by binding to the 5'-leader sequence and broadening the substrate specificity of the ribozyme. The chain is Ribonuclease P protein component from Erwinia tasmaniensis (strain DSM 17950 / CFBP 7177 / CIP 109463 / NCPPB 4357 / Et1/99).